The primary structure comprises 62 residues: Large ribosomal subunit protein bL28 (62 aa).

Belongs to the bacterial ribosomal protein bL28 family.

This chain is Large ribosomal subunit protein bL28, found in Thermobifida fusca (strain YX).